The chain runs to 240 residues: UDP-2,3-diacylglucosamine hydrolase (240 aa).

Mn(2+)-binding residues include D8, H10, D41, N79, and H114. Position 79 to 80 (79 to 80 (NR)) interacts with substrate. Substrate is bound by residues D122, S160, N164, K167, and H195. Mn(2+)-binding residues include H195 and H197.

The protein belongs to the LpxH family. Mn(2+) is required as a cofactor.

The protein resides in the cell inner membrane. The protein localises to the cytoplasm. The enzyme catalyses UDP-2-N,3-O-bis[(3R)-3-hydroxytetradecanoyl]-alpha-D-glucosamine + H2O = 2-N,3-O-bis[(3R)-3-hydroxytetradecanoyl]-alpha-D-glucosaminyl 1-phosphate + UMP + 2 H(+). Its pathway is glycolipid biosynthesis; lipid IV(A) biosynthesis; lipid IV(A) from (3R)-3-hydroxytetradecanoyl-[acyl-carrier-protein] and UDP-N-acetyl-alpha-D-glucosamine: step 4/6. With respect to regulation, inhibited by a sulfonyl piperazine compound that shows antibacterial activity against E.coli; LpxH is the cellular target of this compound. Inhibited by 0.01% (or more) Triton X-100 in vitro. Hydrolyzes the pyrophosphate bond of UDP-2,3-diacylglucosamine to yield 2,3-diacylglucosamine 1-phosphate (lipid X) and UMP by catalyzing the attack of water at the alpha-P atom. Involved in the biosynthesis of lipid A, a phosphorylated glycolipid that anchors the lipopolysaccharide to the outer membrane of the cell. Is essential for E.coli growth. Does not cleave the unacylated UDP-GlcNAc, the mono-acylated UDP-3-O-(R)-3-hydroxymyristoyl-GlcNAc, and CDP-diacylglycerol. The polypeptide is UDP-2,3-diacylglucosamine hydrolase (Escherichia coli (strain K12)).